We begin with the raw amino-acid sequence, 633 residues long: Uracil permease (633 aa).

The next 12 helical transmembrane spans lie at 143–163 (WWQCWITIWIGYGFVGAFVVL), 173–193 (LSFPISSRASFGIFFSLWPVI), 197–217 (VMAIVWYSVQAYIAATPVSLM), 242–262 (YEFMCFFIFWAASLPFLLVPP), 268–288 (LFTVKAVLVPFASFGFLIWAI), 310–330 (FSWAFLRSLMGCMANFSTMVI), 350–370 (LVCIPFLFSITCLIGILVTAA), 400–420 (AGVFLISFVFAVAQLGTNISA), 442–462 (GSLFCAAMALCICPWNLMATS), 465–485 (FTMALSAYAIFLSSIAGVVCS), 521–541 (ALAAYLCGVAPCLPGFIAEVG), and 559–579 (YWVGYGLSFSSYTALCYFFPV).

This sequence belongs to the purine-cytosine permease (2.A.39) family. Glycosylated (possible); but there is not yet direct biochemical evidence for it.

It localises to the membrane. Its function is as follows. Transport of uracil. The sequence is that of Uracil permease (FUR4) from Saccharomyces cerevisiae (strain ATCC 204508 / S288c) (Baker's yeast).